The following is a 650-amino-acid chain: MIRLQTPIIKETIHPKKTPTALNWLYPEKIIHNISSKALIDNIYSENYQHILVGLISLIEPWVYLHTNLKLIDNGHLPLIDDETIILISSGEYMIDYYYRIEVNKYGKQTDLFDKLLQSVNNSNKDFFDKYKNYFKISGIDFDLNINTSNTNRFEIIEKYVIESLVEILDKITDGLDAIYNYDNQRDVLLPIFNNNYNNDNVESIDIDYDLDLLKKVKTIMANPTFKFDKDLMFHPTKSLIMEARETNYRVFNDLGNQIDAIMKNSNNIMIFPYAYFLIKNVHGKNDYPNSSYKKFDNIIINQLNQYFIELSNGEIYSNYHKNAFFVDSINGFRSINHDLYLKRFNDFVPEENNNNAFYDTIKFPNITQVNNMEIIPSDSFYIYNQGKEVIDSIVEKKHNIVVNQSKAKATRSNTYIIDKDTIELNLSVVFKGLLFNNKPVVYPISSNIVTFEIERINSTNYVDNVNVPYQVLQIKNPKVTIKTYDRKTLINKLMKKLFDEDHFLPWYIPNYNQNIVKLLFLINLDKHEYIDFLKKLLQTQNKKELVDYSLYYCFDYQSYSFYNLIWIDPMTVDRYYEIQYLIKFIIIMDNILLLPDVSLRKILIDFNSSYGWYDPNVDLSSVKVSYQNFKNNLLNTLNELDDIYHNKSK.

The protein belongs to the mimivirus L515/L516 family.

It is found in the virion. This is an uncharacterized protein from Acanthamoeba polyphaga (Amoeba).